The primary structure comprises 859 residues: Magnesium transporter ALR1 (859 aa).

Positions 1 to 20 (MSSSSSSSESSPNLSRSNSL) are enriched in low complexity. Disordered regions lie at residues 1–281 (MSSS…MPPQ) and 330–399 (TSST…NIPS). Serine 2 is subject to N-acetylserine. Basic and acidic residues-rich tracts occupy residues 28–42 (KTED…RQHP) and 55–73 (KNKE…EQKS). Tyrosine 77 carries the phosphotyrosine modification. Position 85 is a phosphoserine (serine 85). The segment covering 144–154 (PPKDVGVKRDY) has biased composition (basic and acidic residues). Positions 157-176 (SSSTASSGNKSKLSASSSAS) are enriched in low complexity. Phosphoserine occurs at positions 185 and 188. A compositionally biased stretch (basic and acidic residues) spans 193–203 (IPHESKSDTHS). A compositionally biased stretch (polar residues) spans 213-235 (YSTTSAHSSINPAVLLTKSTSQK). Serine 220, serine 221, and serine 236 each carry phosphoserine. Residue threonine 242 is modified to Phosphothreonine. The span at 252 to 265 (TRASFDSDVSQASR) shows a compositional bias: polar residues. The segment covering 330-339 (TSSTSTSGSS) has biased composition (low complexity). The segment covering 353–375 (EKSESTNETEIHEKKEDEHEKIK) has biased composition (basic and acidic residues). 2 consecutive transmembrane segments (helical) span residues 744 to 764 (TMIG…GMNV) and 773 to 793 (IAWW…GWFL). A disordered region spans residues 830-859 (FNDRSKNINVRAGPSNKSVASLPSRYSRYD). Serine 850 carries the phosphoserine modification.

The protein belongs to the CorA metal ion transporter (MIT) (TC 1.A.35) family.

The protein resides in the cell membrane. Plasma membrane magnesium transporter. In Saccharomyces cerevisiae (strain ATCC 204508 / S288c) (Baker's yeast), this protein is Magnesium transporter ALR1 (ALR1).